Reading from the N-terminus, the 162-residue chain is Caveolin-2 (162 aa).

Residues 1–86 lie on the Cytoplasmic side of the membrane; the sequence is MGLETEKADV…FEISKYVLYK (86 aa). Y19 carries the post-translational modification Phosphotyrosine; by SRC. S20 and S23 each carry phosphoserine. Residues 87–107 constitute an intramembrane region (helical); it reads FLTVFLAIPLAFAAGVLFAVL. Residues 108–162 are Cytoplasmic-facing; sequence SCLHIWILMPFVKTCLMVLPSVQTIWRSVTDVVIAPLCASIGRSFSSVGLQLSHD.

This sequence belongs to the caveolin family. As to quaternary structure, monomer or homodimer. Interacts with CAV1; the interaction forms a stable heterooligomeric complex that is required for targeting to lipid rafts and for caveolae formation. Tyrosine phosphorylated forms do not form heterooligomers with the Tyr-19-phosphorylated form existing as a monomer or dimer. Interacts (tyrosine phosphorylated form) with the SH2 domain-containing proteins, RASA1, NCK1 and SRC. Interacts (tyrosine phosphorylated form) with INSR. Interacts (Tyr-19 phosphorylated form) with MAPK1 (phosphorylated form); the interaction, promoted by insulin, leads to nuclear location and MAPK1 activation. Interacts with STAT3; the interaction is increased on insulin-induced tyrosine phosphorylation leading to STAT activation. Phosphorylated on serine and tyrosine residues. CAV1 promotes phosphorylation on Ser-23 which then targets the complex to the plasma membrane, lipid rafts and caveolae. Phosphorylation on Tyr-19 is required for insulin-induced phosphorylation of MAPK1 and DNA binding of STAT3. Tyrosine phosphorylation is induced by both EGF and insulin.

It is found in the nucleus. The protein resides in the cytoplasm. It localises to the golgi apparatus membrane. The protein localises to the cell membrane. Its subcellular location is the membrane. It is found in the caveola. In terms of biological role, may act as a scaffolding protein within caveolar membranes. Interacts directly with G-protein alpha subunits and can functionally regulate their activity. Acts as an accessory protein in conjunction with CAV1 in targeting to lipid rafts and driving caveolae formation. Positive regulator of cellular mitogenesis of the MAPK signaling pathway. Required for the insulin-stimulated nuclear translocation and activation of MAPK1 and STAT3, and the subsequent regulation of cell cycle progression. This Oryctolagus cuniculus (Rabbit) protein is Caveolin-2 (CAV2).